Consider the following 297-residue polypeptide: MKMKRTVSSNSEAYSYNESPHSPLRFHSPLSDAGDLPESRYVSPEGSPFKIENPKSIVAGNKLTQFSPLPSPIPPPPPQIPPPRRQRNARVPMNSSLDKSPSSMVVQNSWVREDGQQNTTRKAGAPMNGEESATTAVNRARRDDLVSVTALGFRITEVILCVISFSIMAADKTQGWSGDSYDRYKEYRYCLAVNVIAFVYSAFEACDAACYMAKESYMMNCGFHDLFVFSMDQLLAYLLMSASSCAATRVDDWVSNWGKDEFTQMATASIAVSFLAFGAFAVSALISSYRLFTHASS.

The tract at residues 1–136 (MKMKRTVSSN…MNGEESATTA (136 aa)) is disordered. Residues 1-149 (MKMKRTVSSN…ARRDDLVSVT (149 aa)) lie on the Cytoplasmic side of the membrane. Low complexity predominate over residues 8–19 (SSNSEAYSYNES). A compositionally biased stretch (pro residues) spans 69–83 (LPSPIPPPPPQIPPP). The segment covering 93 to 121 (MNSSLDKSPSSMVVQNSWVREDGQQNTTR) has biased composition (polar residues). Residues 150–170 (ALGFRITEVILCVISFSIMAA) traverse the membrane as a helical segment. At 171 to 189 (DKTQGWSGDSYDRYKEYRY) the chain is on the extracellular side. Residues 190–210 (CLAVNVIAFVYSAFEACDAAC) form a helical membrane-spanning segment. Topologically, residues 211 to 225 (YMAKESYMMNCGFHD) are cytoplasmic. A helical membrane pass occupies residues 226–246 (LFVFSMDQLLAYLLMSASSCA). The Extracellular segment spans residues 247-265 (ATRVDDWVSNWGKDEFTQM). A helical transmembrane segment spans residues 266-286 (ATASIAVSFLAFGAFAVSALI). The Cytoplasmic portion of the chain corresponds to 287–297 (SSYRLFTHASS).

The protein belongs to the Casparian strip membrane proteins (CASP) family. In terms of assembly, homodimer and heterodimers.

It is found in the cell membrane. The sequence is that of CASP-like protein 4A2 from Arabidopsis lyrata subsp. lyrata (Lyre-leaved rock-cress).